The chain runs to 420 residues: Hemocyanin 2-c chain (420 aa).

Positions 1 to 12 are enriched in basic residues; the sequence is DFGHSKKIRKNV. The tract at residues 1–20 is disordered; sequence DFGHSKKIRKNVHSLTAEEQ. Residue H46 coordinates Cu cation. The cysteines at positions 52 and 63 are disulfide-linked. Residues H66, H73, H185, H189, and H216 each contribute to the Cu cation site. Intrachain disulfides connect C175-C242 and C335-C342.

In terms of processing, O-glycosylated. In terms of tissue distribution, hemolymph.

The protein resides in the secreted. It localises to the extracellular space. In terms of biological role, hemocyanins are copper-containing oxygen carriers occurring freely dissolved in the hemolymph of many mollusks and arthropods. The protein is Hemocyanin 2-c chain of Megathura crenulata (Giant keyhole limpet).